Consider the following 174-residue polypeptide: Variant surface antigen B (174 aa).

A signal peptide spans 1-29; the sequence is MKKSIFSKKLLVSFGSLVALASIPLIAIS. Cys30 carries the N-palmitoyl cysteine lipid modification. Cys30 carries S-diacylglycerol cysteine lipidation. The interval 32–174 is disordered; it reads QTNTDKSQQP…SQDSGNGSTK (143 aa). Residues 38-49 show a composition bias toward low complexity; the sequence is SQQPGSGSSTSG. Over residues 50 to 75 the composition is skewed to gly residues; it reads GQSGTGLGSGTTTGGQSGTTTGGRSG. Low complexity predominate over residues 76 to 97; it reads SGSSSSTTGGQTGTGSDSQDSG. A run of 7 repeats spans residues 88–99, 100–111, 112–123, 124–135, 136–147, 148–159, and 160–171. Residues 88-171 form a 7 X 12 AA tandem repeats region; sequence GTGSDSQDSG…GSDSQDSGNG (84 aa). Positions 102–174 are enriched in polar residues; it reads GSDSQDSGAK…SQDSGNGSTK (73 aa).

The protein resides in the cell membrane. In terms of biological role, responsible for the antigenic diversity for host adaptation. In Mesomycoplasma hyorhinis (Mycoplasma hyorhinis), this protein is Variant surface antigen B (vlpB).